Reading from the N-terminus, the 361-residue chain is Phospho-N-acetylmuramoyl-pentapeptide-transferase (361 aa).

A run of 10 helical transmembrane segments spans residues 25-45 (TGGAMVTGALFVFLCGPWIID), 71-91 (TPTMGGLMVLSGLVVGTVLWA), 94-114 (LNPYVWIVLAVTLGFGFVGFY), 133-153 (WRLLIEAVIAAAACYALVRLG), 169-189 (VAINLGWFFVGFGAFIVVGAG), 200-220 (GLAIVPVMIAAASFGLISYLA), 240-260 (LSVLCGALLGAGLGFLWFNAP), 264-284 (IFMGDTGSLALGGMLGSIAVA), 289-309 (IVLAVIGGLFVLEAVSVIVQV), and 338-358 (QIVIRFWIIAVMLALAGLSTL).

It belongs to the glycosyltransferase 4 family. MraY subfamily. It depends on Mg(2+) as a cofactor.

It localises to the cell inner membrane. The catalysed reaction is UDP-N-acetyl-alpha-D-muramoyl-L-alanyl-gamma-D-glutamyl-meso-2,6-diaminopimeloyl-D-alanyl-D-alanine + di-trans,octa-cis-undecaprenyl phosphate = di-trans,octa-cis-undecaprenyl diphospho-N-acetyl-alpha-D-muramoyl-L-alanyl-D-glutamyl-meso-2,6-diaminopimeloyl-D-alanyl-D-alanine + UMP. The protein operates within cell wall biogenesis; peptidoglycan biosynthesis. Its function is as follows. Catalyzes the initial step of the lipid cycle reactions in the biosynthesis of the cell wall peptidoglycan: transfers peptidoglycan precursor phospho-MurNAc-pentapeptide from UDP-MurNAc-pentapeptide onto the lipid carrier undecaprenyl phosphate, yielding undecaprenyl-pyrophosphoryl-MurNAc-pentapeptide, known as lipid I. The polypeptide is Phospho-N-acetylmuramoyl-pentapeptide-transferase (Rhodopseudomonas palustris (strain BisB18)).